Reading from the N-terminus, the 734-residue chain is Ribosomal RNA large subunit methyltransferase K/L (734 aa).

The 112-residue stretch at 43–154 (VGYRSCLWSR…RNQLTLSLDL (112 aa)) folds into the THUMP domain.

It belongs to the methyltransferase superfamily. RlmKL family.

The protein resides in the cytoplasm. The catalysed reaction is guanosine(2445) in 23S rRNA + S-adenosyl-L-methionine = N(2)-methylguanosine(2445) in 23S rRNA + S-adenosyl-L-homocysteine + H(+). It catalyses the reaction guanosine(2069) in 23S rRNA + S-adenosyl-L-methionine = N(2)-methylguanosine(2069) in 23S rRNA + S-adenosyl-L-homocysteine + H(+). Its function is as follows. Specifically methylates the guanine in position 2445 (m2G2445) and the guanine in position 2069 (m7G2069) of 23S rRNA. This Hydrogenovibrio crunogenus (strain DSM 25203 / XCL-2) (Thiomicrospira crunogena) protein is Ribosomal RNA large subunit methyltransferase K/L.